The chain runs to 235 residues: 2-C-methyl-D-erythritol 4-phosphate cytidylyltransferase (235 aa).

This sequence belongs to the IspD/TarI cytidylyltransferase family. IspD subfamily.

The enzyme catalyses 2-C-methyl-D-erythritol 4-phosphate + CTP + H(+) = 4-CDP-2-C-methyl-D-erythritol + diphosphate. It functions in the pathway isoprenoid biosynthesis; isopentenyl diphosphate biosynthesis via DXP pathway; isopentenyl diphosphate from 1-deoxy-D-xylulose 5-phosphate: step 2/6. Catalyzes the formation of 4-diphosphocytidyl-2-C-methyl-D-erythritol from CTP and 2-C-methyl-D-erythritol 4-phosphate (MEP). The polypeptide is 2-C-methyl-D-erythritol 4-phosphate cytidylyltransferase (Pseudomonas putida (strain W619)).